Here is a 207-residue protein sequence, read N- to C-terminus: LexA repressor (207 aa).

The H-T-H motif DNA-binding region spans 28 to 48 (RAEISRELGFKSANAAEEHLK). Residues Ser-123 and Lys-160 each act as for autocatalytic cleavage activity in the active site.

The protein belongs to the peptidase S24 family. Homodimer.

It catalyses the reaction Hydrolysis of Ala-|-Gly bond in repressor LexA.. Represses a number of genes involved in the response to DNA damage (SOS response), including recA and lexA. In the presence of single-stranded DNA, RecA interacts with LexA causing an autocatalytic cleavage which disrupts the DNA-binding part of LexA, leading to derepression of the SOS regulon and eventually DNA repair. This Haemophilus influenzae (strain ATCC 51907 / DSM 11121 / KW20 / Rd) protein is LexA repressor.